Reading from the N-terminus, the 272-residue chain is Pyrroline-5-carboxylate reductase (272 aa).

Belongs to the pyrroline-5-carboxylate reductase family.

The protein localises to the cytoplasm. The catalysed reaction is L-proline + NADP(+) = (S)-1-pyrroline-5-carboxylate + NADPH + 2 H(+). It catalyses the reaction L-proline + NAD(+) = (S)-1-pyrroline-5-carboxylate + NADH + 2 H(+). It functions in the pathway amino-acid biosynthesis; L-proline biosynthesis; L-proline from L-glutamate 5-semialdehyde: step 1/1. Its function is as follows. Catalyzes the reduction of 1-pyrroline-5-carboxylate (PCA) to L-proline. This Vibrio alginolyticus protein is Pyrroline-5-carboxylate reductase.